The chain runs to 802 residues: Phenylalanine--tRNA ligase beta subunit (802 aa).

A tRNA-binding domain is found at 39–150 (AKALKPFTIA…ADAPIGAAYA (112 aa)). The B5 domain maps to 400–475 (GDDRVIDFPV…RIYGVDKVPM (76 aa)). Residues Asp-453, Asp-459, Glu-462, and Glu-463 each contribute to the Mg(2+) site. The region spanning 708–801 (SAFQPVSRDF…VTKKTGGTLR (94 aa)) is the FDX-ACB domain.

It belongs to the phenylalanyl-tRNA synthetase beta subunit family. Type 1 subfamily. Tetramer of two alpha and two beta subunits. Mg(2+) is required as a cofactor.

It is found in the cytoplasm. The enzyme catalyses tRNA(Phe) + L-phenylalanine + ATP = L-phenylalanyl-tRNA(Phe) + AMP + diphosphate + H(+). In Bradyrhizobium diazoefficiens (strain JCM 10833 / BCRC 13528 / IAM 13628 / NBRC 14792 / USDA 110), this protein is Phenylalanine--tRNA ligase beta subunit.